A 376-amino-acid polypeptide reads, in one-letter code: MSDCSQNLLYDKFELPESVKMMAVEGSGGSVDKQASFIAEPLERGMGHTLGNALRRALLIGLEAPAIISFSMTGVLHEYMAINGIIEDVTNIILNLKGALLKKYPFQDSENGRCTQLLKSKVSIDASDLAACGGQKAVTLADLLQEGGFESVNPDYVIFTVTQPMQLDITLRVAFGRGYTTSERIVLEDKGVNEIVLDAAFSPVVLVNYFVEDTRVGQDTDFDRLILHVETDGRVSPKEALAFSTQILTKHFSIFEKMDEKKIVFEEAISLEKENKDDILHKLVLGINEIELSVRSTNCLSNANIETIGELVIMPEPRLLQFRNFGKKSLCEIKNKLKEMKLELGMDLSQFGVGLDNVKEKMKWYADKIRSKNGKG.

The segment at 1–259 is alpha N-terminal domain (alpha-NTD); the sequence is MSDCSQNLLY…KHFSIFEKMD (259 aa). Residues 276 to 376 are alpha C-terminal domain (alpha-CTD); the sequence is KDDILHKLVL…DKIRSKNGKG (101 aa).

It belongs to the RNA polymerase alpha chain family. In terms of assembly, homodimer. The RNAP catalytic core consists of 2 alpha, 1 beta, 1 beta' and 1 omega subunit. When a sigma factor is associated with the core the holoenzyme is formed, which can initiate transcription.

The enzyme catalyses RNA(n) + a ribonucleoside 5'-triphosphate = RNA(n+1) + diphosphate. Functionally, DNA-dependent RNA polymerase catalyzes the transcription of DNA into RNA using the four ribonucleoside triphosphates as substrates. This chain is DNA-directed RNA polymerase subunit alpha, found in Chlamydia abortus (strain DSM 27085 / S26/3) (Chlamydophila abortus).